Here is a 294-residue protein sequence, read N- to C-terminus: Putative pyruvate, phosphate dikinase regulatory protein (294 aa).

Position 156 to 163 (G156 to T163) interacts with ADP.

The protein belongs to the pyruvate, phosphate/water dikinase regulatory protein family. PDRP subfamily.

It catalyses the reaction N(tele)-phospho-L-histidyl/L-threonyl-[pyruvate, phosphate dikinase] + ADP = N(tele)-phospho-L-histidyl/O-phospho-L-threonyl-[pyruvate, phosphate dikinase] + AMP + H(+). The enzyme catalyses N(tele)-phospho-L-histidyl/O-phospho-L-threonyl-[pyruvate, phosphate dikinase] + phosphate + H(+) = N(tele)-phospho-L-histidyl/L-threonyl-[pyruvate, phosphate dikinase] + diphosphate. Bifunctional serine/threonine kinase and phosphorylase involved in the regulation of the pyruvate, phosphate dikinase (PPDK) by catalyzing its phosphorylation/dephosphorylation. This is Putative pyruvate, phosphate dikinase regulatory protein from Cutibacterium acnes (strain DSM 16379 / KPA171202) (Propionibacterium acnes).